A 201-amino-acid polypeptide reads, in one-letter code: ATP synthase subunit delta (201 aa).

Belongs to the ATPase delta chain family. As to quaternary structure, F-type ATPases have 2 components, F(1) - the catalytic core - and F(0) - the membrane proton channel. F(1) has five subunits: alpha(3), beta(3), gamma(1), delta(1), epsilon(1). F(0) has three main subunits: a(1), b(2) and c(10-14). The alpha and beta chains form an alternating ring which encloses part of the gamma chain. F(1) is attached to F(0) by a central stalk formed by the gamma and epsilon chains, while a peripheral stalk is formed by the delta and b chains.

The protein localises to the cell inner membrane. Functionally, f(1)F(0) ATP synthase produces ATP from ADP in the presence of a proton or sodium gradient. F-type ATPases consist of two structural domains, F(1) containing the extramembraneous catalytic core and F(0) containing the membrane proton channel, linked together by a central stalk and a peripheral stalk. During catalysis, ATP synthesis in the catalytic domain of F(1) is coupled via a rotary mechanism of the central stalk subunits to proton translocation. Its function is as follows. This protein is part of the stalk that links CF(0) to CF(1). It either transmits conformational changes from CF(0) to CF(1) or is implicated in proton conduction. This chain is ATP synthase subunit delta, found in Xanthobacter autotrophicus (strain ATCC BAA-1158 / Py2).